Consider the following 92-residue polypeptide: Small ribosomal subunit protein uS17 (92 aa).

This sequence belongs to the universal ribosomal protein uS17 family. In terms of assembly, part of the 30S ribosomal subunit.

Its function is as follows. One of the primary rRNA binding proteins, it binds specifically to the 5'-end of 16S ribosomal RNA. The chain is Small ribosomal subunit protein uS17 from Cupriavidus pinatubonensis (strain JMP 134 / LMG 1197) (Cupriavidus necator (strain JMP 134)).